A 473-amino-acid chain; its full sequence is Serine palmitoyltransferase 1 (473 aa).

Residues 1–15 (MAMAAEQWVLVEMVQ) are Lumenal-facing. An interaction with SPTLC2 region spans residues 1–66 (MAMAAEQWVL…KEELIEEWQP (66 aa)). A helical membrane pass occupies residues 16 to 36 (ALYEAPAYHLILEGILILWII). Over 37–473 (RLVFSKTYKL…IREAAQAVLL (437 aa)) the chain is Cytoplasmic. Tyr164 carries the phosphotyrosine; by ABL modification.

This sequence belongs to the class-II pyridoxal-phosphate-dependent aminotransferase family. Component of the serine palmitoyltransferase (SPT) complex, which is also composed of SPTLC2 or SPTLC3 and SPTSSA or SPTSSB. The heterodimer with SPTLC2 or SPTLC3 forms the catalytic core of the enzyme, while SPTSSA or SPTSSB subunits determine substrate specificity. SPT also interacts with ORMDL proteins, especially ORMDL3, which negatively regulate SPT activity in the presence of ceramides. Forms dimers of heterodimers with SPTLC2. Interacts with RTN4. It depends on pyridoxal 5'-phosphate as a cofactor. In terms of processing, phosphorylation at Tyr-164 inhibits activity and promotes cell survival.

It localises to the endoplasmic reticulum membrane. The enzyme catalyses L-serine + hexadecanoyl-CoA + H(+) = 3-oxosphinganine + CO2 + CoA. It carries out the reaction octadecanoyl-CoA + L-serine + H(+) = 3-oxoeicosasphinganine + CO2 + CoA. The catalysed reaction is tetradecanoyl-CoA + L-serine + H(+) = 3-oxohexadecasphinganine + CO2 + CoA. It catalyses the reaction dodecanoyl-CoA + L-serine + H(+) = 3-oxotetradecasphinganine + CO2 + CoA. The protein operates within lipid metabolism; sphingolipid metabolism. SPT complex catalytic activity is negatively regulated by ORMDL proteins, including ORMDL3, in the presence of ceramides. This mechanism allows to maintain ceramide levels at sufficient concentrations for the production of complex sphingolipids, but which prevents the accumulation of ceramides to levels that trigger apoptosis. Component of the serine palmitoyltransferase multisubunit enzyme (SPT) that catalyzes the initial and rate-limiting step in sphingolipid biosynthesis by condensing L-serine and activated acyl-CoA (most commonly palmitoyl-CoA) to form long-chain bases. The SPT complex is also composed of SPTLC2 or SPTLC3 and SPTSSA or SPTSSB. Within this complex, the heterodimer with SPTLC2 or SPTLC3 forms the catalytic core. The composition of the serine palmitoyltransferase (SPT) complex determines the substrate preference. The SPTLC1-SPTLC2-SPTSSA complex shows a strong preference for C16-CoA substrate, while the SPTLC1-SPTLC3-SPTSSA isozyme uses both C14-CoA and C16-CoA as substrates, with a slight preference for C14-CoA. The SPTLC1-SPTLC2-SPTSSB complex shows a strong preference for C18-CoA substrate, while the SPTLC1-SPTLC3-SPTSSB isozyme displays an ability to use a broader range of acyl-CoAs, without apparent preference. Required for adipocyte cell viability and metabolic homeostasis. The chain is Serine palmitoyltransferase 1 (SPTLC1) from Cricetulus griseus (Chinese hamster).